We begin with the raw amino-acid sequence, 266 residues long: 4-hydroxy-tetrahydrodipicolinate reductase (266 aa).

10–15 is a binding site for NAD(+); the sequence is GPRGRM. Residue lysine 38 participates in NADP(+) binding. Residues 99-101 and 125-128 contribute to the NAD(+) site; these read GTT and APNF. Histidine 155 functions as the Proton donor/acceptor in the catalytic mechanism. Histidine 156 contacts (S)-2,3,4,5-tetrahydrodipicolinate. The active-site Proton donor is lysine 159. 165–166 serves as a coordination point for (S)-2,3,4,5-tetrahydrodipicolinate; it reads GT.

It belongs to the DapB family.

Its subcellular location is the cytoplasm. It catalyses the reaction (S)-2,3,4,5-tetrahydrodipicolinate + NAD(+) + H2O = (2S,4S)-4-hydroxy-2,3,4,5-tetrahydrodipicolinate + NADH + H(+). It carries out the reaction (S)-2,3,4,5-tetrahydrodipicolinate + NADP(+) + H2O = (2S,4S)-4-hydroxy-2,3,4,5-tetrahydrodipicolinate + NADPH + H(+). It functions in the pathway amino-acid biosynthesis; L-lysine biosynthesis via DAP pathway; (S)-tetrahydrodipicolinate from L-aspartate: step 4/4. Catalyzes the conversion of 4-hydroxy-tetrahydrodipicolinate (HTPA) to tetrahydrodipicolinate. This is 4-hydroxy-tetrahydrodipicolinate reductase from Bacillus thuringiensis subsp. konkukian (strain 97-27).